Here is a 159-residue protein sequence, read N- to C-terminus: 2-C-methyl-D-erythritol 2,4-cyclodiphosphate synthase (159 aa).

Residues Asp8 and His10 each contribute to the a divalent metal cation site. 4-CDP-2-C-methyl-D-erythritol 2-phosphate-binding positions include 8–10 (DVH) and 34–35 (HS). Residue His42 coordinates a divalent metal cation. 4-CDP-2-C-methyl-D-erythritol 2-phosphate-binding positions include 56 to 58 (DIG), 100 to 106 (AQAPKMA), 132 to 135 (TTTE), Phe139, and Arg142.

The protein belongs to the IspF family. In terms of assembly, homotrimer. A divalent metal cation is required as a cofactor.

It carries out the reaction 4-CDP-2-C-methyl-D-erythritol 2-phosphate = 2-C-methyl-D-erythritol 2,4-cyclic diphosphate + CMP. Its pathway is isoprenoid biosynthesis; isopentenyl diphosphate biosynthesis via DXP pathway; isopentenyl diphosphate from 1-deoxy-D-xylulose 5-phosphate: step 4/6. In terms of biological role, involved in the biosynthesis of isopentenyl diphosphate (IPP) and dimethylallyl diphosphate (DMAPP), two major building blocks of isoprenoid compounds. Catalyzes the conversion of 4-diphosphocytidyl-2-C-methyl-D-erythritol 2-phosphate (CDP-ME2P) to 2-C-methyl-D-erythritol 2,4-cyclodiphosphate (ME-CPP) with a corresponding release of cytidine 5-monophosphate (CMP). This Marinobacter nauticus (strain ATCC 700491 / DSM 11845 / VT8) (Marinobacter aquaeolei) protein is 2-C-methyl-D-erythritol 2,4-cyclodiphosphate synthase.